We begin with the raw amino-acid sequence, 309 residues long: Protease HtpX homolog (309 aa).

The next 2 membrane-spanning stretches (helical) occupy residues 7 to 27 and 28 to 48; these read AILL…IGGA and SGAM…YWNS. His130 provides a ligand contact to Zn(2+). Glu131 is an active-site residue. His134 contacts Zn(2+). 2 consecutive transmembrane segments (helical) span residues 145–165 and 173–193; these read VTAT…FFGG and GLGV…AMLV. Glu202 lines the Zn(2+) pocket.

The protein belongs to the peptidase M48B family. It depends on Zn(2+) as a cofactor.

It is found in the cell inner membrane. This Rhodopseudomonas palustris (strain BisA53) protein is Protease HtpX homolog.